The following is a 520-amino-acid chain: GMP synthase [glutamine-hydrolyzing] (520 aa).

The 194-residue stretch at 9–202 folds into the Glutamine amidotransferase type-1 domain; that stretch reads SVLIIDFGSQ…VHNIAGITGD (194 aa). C86 acts as the Nucleophile in catalysis. Residues H176 and E178 contribute to the active site. Residues 203 to 395 enclose the GMPS ATP-PPase domain; sequence WSMSAYRAKA…LGLPDSFIGR (193 aa). 230–236 provides a ligand contact to ATP; sequence SGGVDSS.

As to quaternary structure, homodimer.

The catalysed reaction is XMP + L-glutamine + ATP + H2O = GMP + L-glutamate + AMP + diphosphate + 2 H(+). It participates in purine metabolism; GMP biosynthesis; GMP from XMP (L-Gln route): step 1/1. In terms of biological role, catalyzes the synthesis of GMP from XMP. This chain is GMP synthase [glutamine-hydrolyzing], found in Allorhizobium ampelinum (strain ATCC BAA-846 / DSM 112012 / S4) (Agrobacterium vitis (strain S4)).